We begin with the raw amino-acid sequence, 597 residues long: Formate--tetrahydrofolate ligase (597 aa).

84 to 91 (TPLGEGKS) is an ATP binding site.

The protein belongs to the formate--tetrahydrofolate ligase family.

The catalysed reaction is (6S)-5,6,7,8-tetrahydrofolate + formate + ATP = (6R)-10-formyltetrahydrofolate + ADP + phosphate. It participates in one-carbon metabolism; tetrahydrofolate interconversion. The protein is Formate--tetrahydrofolate ligase of Dehalococcoides mccartyi (strain ATCC BAA-2266 / KCTC 15142 / 195) (Dehalococcoides ethenogenes (strain 195)).